The primary structure comprises 332 residues: uncharacterized protein (332 aa).

An N-terminal signal peptide occupies residues 1 to 23; sequence MKRIPSLIIGLLLILATWHSVLA. The helical transmembrane segment at 231–251 threads the bilayer; it reads SFFLGMIVTLIILAPVILYLW.

It localises to the membrane. This is an uncharacterized protein from Pyrococcus horikoshii (strain ATCC 700860 / DSM 12428 / JCM 9974 / NBRC 100139 / OT-3).